The following is a 216-amino-acid chain: N-acetyltransferase 9-like protein (216 aa).

The N-acetyltransferase domain maps to 68–215 (VLLNENDEAK…DHVELELMRT (148 aa)).

The protein belongs to the acetyltransferase family. GNAT subfamily.

The protein localises to the cytoplasm. It localises to the nucleus. This chain is N-acetyltransferase 9-like protein, found in Schizosaccharomyces pombe (strain 972 / ATCC 24843) (Fission yeast).